We begin with the raw amino-acid sequence, 881 residues long: Envelope glycoprotein gp160 (881 aa).

The N-terminal stretch at 1–22 (MGCLKNQLLIAILLLSVYGIYC) is a signal peptide. Residues 23–696 (TQYVTVFYGV…ASWIKYIQYG (674 aa)) lie on the Extracellular side of the membrane. Residue Asn37 is glycosylated (N-linked (GlcNAc...) asparagine; by host). A disulfide bond links Cys44 and Cys57. Residues Asn70, Asn114, Asn148, Asn158, Asn173, Asn186, Asn200, Asn204, Asn214, Asn246, Asn249, Asn280, Asn286, Asn297, Asn308, Asn318, Asn373, and Asn379 are each glycosylated (N-linked (GlcNAc...) asparagine; by host). Intrachain disulfides connect Cys101–Cys222, Cys108–Cys213, Cys113–Cys170, Cys235–Cys265, and Cys245–Cys257. The V1 stretch occupies residues 113–169 (CNKSETDRWGLTKSSTTITTAAPTSAPVSEKLDMVNETSSCIAQNNCTGLEQEQMIS). Residues 170-213 (CKFNMTGLKRDKTKEYNETWYSTDLVCEQRNSTDNESRCYMNHC) are V2. Residues 313–345 (CRRPGNKTVLPVTIMSELVFHSQPINDRPKQAW) are V3. Cys313 and Cys346 are oxidised to a cystine. Cystine bridges form between Cys397–Cys461 and Cys404–Cys434. The segment at 404 to 434 (CKMNWFLNWVEDKDVTTQRPKERHRKNYVPC) is V4. 2 N-linked (GlcNAc...) asparagine; by host glycosylation sites follow: Asn462 and Asn478. A V5 region spans residues 477–484 (GNQTSITM). Positions 528–548 (GVFVLGFLGFLATAGSAIGAV) are fusion peptide. The interval 591–607 (LQTKVTAIEKYLKDQAQ) is immunosuppression. 3 N-linked (GlcNAc...) asparagine; by host glycosylation sites follow: Asn627, Asn636, and Asn652. Residues 636-668 (NDTWQEWERKVDFLEENITALLEEAQIQQEKNM) are a coiled coil. The MPER; binding to GalCer stretch occupies residues 673–694 (KLNSWDVFGNWFDLASWIKYIQ). Residues 697 to 717 (IYVVVGVILLRIVIYIVQMLA) traverse the membrane as a helical segment. The Cytoplasmic portion of the chain corresponds to 718 to 881 (KLRQGYRPVF…IRQGLELTLL (164 aa)). The YXXV motif; contains endocytosis signal motif lies at 723 to 726 (YRPV). The interval 737–761 (THTQQDPALPTREGKEGDGGEGGGN) is disordered. Residue Cys789 is the site of S-palmitoyl cysteine; by host attachment. A Di-leucine internalization motif motif is present at residues 880-881 (LL).

In terms of assembly, the mature envelope protein (Env) consists of a homotrimer of non-covalently associated gp120-gp41 heterodimers. The resulting complex protrudes from the virus surface as a spike. Interacts with host CD4 and CCR5. Gp120 also interacts with the C-type lectins CD209/DC-SIGN and CLEC4M/DC-SIGNR (collectively referred to as DC-SIGN(R)). As to quaternary structure, the mature envelope protein (Env) consists of a homotrimer of non-covalently associated gp120-gp41 heterodimers. The resulting complex protrudes from the virus surface as a spike. Specific enzymatic cleavages in vivo yield mature proteins. Envelope glycoproteins are synthesized as an inactive precursor that is heavily N-glycosylated and processed likely by host cell furin in the Golgi to yield the mature SU and TM proteins. The cleavage site between SU and TM requires the minimal sequence [KR]-X-[KR]-R. In terms of processing, palmitoylation of the transmembrane protein and of Env polyprotein (prior to its proteolytic cleavage) is essential for their association with host cell membrane lipid rafts. Palmitoylation is therefore required for envelope trafficking to classical lipid rafts, but not for viral replication.

Its subcellular location is the virion membrane. It localises to the host cell membrane. It is found in the host endosome membrane. In terms of biological role, the surface protein gp120 (SU) attaches the virus to the host lymphoid cell by binding to the primary receptor CD4. This interaction induces a structural rearrangement creating a high affinity binding site for a chemokine coreceptor like CCR5. This peculiar 2 stage receptor-interaction strategy allows gp120 to maintain the highly conserved coreceptor-binding site in a cryptic conformation, protected from neutralizing antibodies. These changes are transmitted to the transmembrane protein gp41 and are thought to activate its fusogenic potential by unmasking its fusion peptide. Functionally, surface protein gp120 (SU) may target the virus to gut-associated lymphoid tissue (GALT) by binding host ITGA4/ITGB7 (alpha-4/beta-7 integrins), a complex that mediates T-cell migration to the GALT. Interaction between gp120 and ITGA4/ITGB7 would allow the virus to enter GALT early in the infection, infecting and killing most of GALT's resting CD4+ T-cells. This T-cell depletion is believed to be the major insult to the host immune system leading to AIDS. Its function is as follows. The surface protein gp120 is a ligand for CD209/DC-SIGN and CLEC4M/DC-SIGNR, which are respectively found on dendritic cells (DCs), and on endothelial cells of liver sinusoids and lymph node sinuses. These interactions allow capture of viral particles at mucosal surfaces by these cells and subsequent transmission to permissive cells. DCs are professional antigen presenting cells, critical for host immunity by inducing specific immune responses against a broad variety of pathogens. They act as sentinels in various tissues where they take up antigen, process it, and present it to T-cells following migration to lymphoid organs. SIV subverts the migration properties of dendritic cells to gain access to CD4+ T-cells in lymph nodes. Virus transmission to permissive T-cells occurs either in trans (without DCs infection, through viral capture and transmission), or in cis (following DCs productive infection, through the usual CD4-gp120 interaction), thereby inducing a robust infection. In trans infection, bound virions remain infectious over days and it is proposed that they are not degraded, but protected in non-lysosomal acidic organelles within the DCs close to the cell membrane thus contributing to the viral infectious potential during DCs' migration from the periphery to the lymphoid tissues. On arrival at lymphoid tissues, intact virions recycle back to DCs' cell surface allowing virus transmission to CD4+ T-cells. Virion capture also seems to lead to MHC-II-restricted viral antigen presentation, and probably to the activation of SIV-specific CD4+ cells. The transmembrane protein gp41 (TM) acts as a class I viral fusion protein. Under the current model, the protein has at least 3 conformational states: pre-fusion native state, pre-hairpin intermediate state, and post-fusion hairpin state. During fusion of viral and target intracellular membranes, the coiled coil regions (heptad repeats) assume a trimer-of-hairpins structure, positioning the fusion peptide in close proximity to the C-terminal region of the ectodomain. The formation of this structure appears to drive apposition and subsequent fusion of viral and target cell membranes. Complete fusion occurs in host cell endosomes. The virus undergoes clathrin-dependent internalization long before endosomal fusion, thus minimizing the surface exposure of conserved viral epitopes during fusion and reducing the efficacy of inhibitors targeting these epitopes. Membranes fusion leads to delivery of the nucleocapsid into the cytoplasm. In terms of biological role, the envelope glycoprotein gp160 precursor down-modulates cell surface CD4 antigen by interacting with it in the endoplasmic reticulum and blocking its transport to the cell surface. Functionally, the gp120-gp41 heterodimer allows rapid transcytosis of the virus through CD4 negative cells such as simple epithelial monolayers of the intestinal, rectal and endocervical epithelial barriers. Both gp120 and gp41 specifically recognize glycosphingolipids galactosyl-ceramide (GalCer) or 3' sulfo-galactosyl-ceramide (GalS) present in the lipid rafts structures of epithelial cells. Binding to these alternative receptors allows the rapid transcytosis of the virus through the epithelial cells. This transcytotic vesicle-mediated transport of virions from the apical side to the basolateral side of the epithelial cells does not involve infection of the cells themselves. This chain is Envelope glycoprotein gp160 (env), found in Simian immunodeficiency virus (isolate K78) (SIV-mac).